The sequence spans 178 residues: Large ribosomal subunit protein uL6 (178 aa).

Belongs to the universal ribosomal protein uL6 family. Part of the 50S ribosomal subunit.

In terms of biological role, this protein binds to the 23S rRNA, and is important in its secondary structure. It is located near the subunit interface in the base of the L7/L12 stalk, and near the tRNA binding site of the peptidyltransferase center. The protein is Large ribosomal subunit protein uL6 of Maridesulfovibrio salexigens (strain ATCC 14822 / DSM 2638 / NCIMB 8403 / VKM B-1763) (Desulfovibrio salexigens).